A 121-amino-acid polypeptide reads, in one-letter code: Large ribosomal subunit protein uL24 (121 aa).

This sequence belongs to the universal ribosomal protein uL24 family. In terms of assembly, part of the 50S ribosomal subunit.

In terms of biological role, one of two assembly initiator proteins, it binds directly to the 5'-end of the 23S rRNA, where it nucleates assembly of the 50S subunit. Located at the polypeptide exit tunnel on the outside of the subunit. This chain is Large ribosomal subunit protein uL24, found in Pyrococcus abyssi (strain GE5 / Orsay).